A 303-amino-acid polypeptide reads, in one-letter code: Lipase chaperone (303 aa).

Residues 7 to 23 (TLAAACAAWLAWWAWPD) form a helical membrane-spanning segment.

Belongs to the lipase chaperone family.

The protein resides in the cell inner membrane. May be involved in the folding of the extracellular lipase during its passage through the periplasm. The chain is Lipase chaperone (lifO) from Chromobacterium violaceum (strain ATCC 12472 / DSM 30191 / JCM 1249 / CCUG 213 / NBRC 12614 / NCIMB 9131 / NCTC 9757 / MK).